A 569-amino-acid chain; its full sequence is Alpha-keto-acid decarboxylase (569 aa).

Glutamate 57 serves as a coordination point for thiamine diphosphate. Positions 392-474 (TAFYGMVEHR…VVVNNDGYTI (83 aa)) are thiamine pyrophosphate binding. Mg(2+) contacts are provided by aspartate 442, asparagine 469, and glycine 471.

This sequence belongs to the TPP enzyme family. It depends on a metal cation as a cofactor. Requires thiamine diphosphate as cofactor.

Functionally, decarboxylates branched-chain and aromatic alpha-keto acids to aldehydes. The sequence is that of Alpha-keto-acid decarboxylase (kdc) from Mycobacterium leprae (strain TN).